The sequence spans 120 residues: uncharacterized protein (120 aa).

The N-terminal stretch at 1–18 (MRSWIPLLVLFAVLAVFA) is a signal peptide. Positions 20 to 99 (AGKSSESDES…GDNRVKRDGL (80 aa)) are disordered.

This is an uncharacterized protein from Caenorhabditis elegans.